Reading from the N-terminus, the 335-residue chain is tRNA N6-adenosine threonylcarbamoyltransferase (335 aa).

The Fe cation site is built by histidine 112 and histidine 116. Substrate is bound by residues 134 to 138, aspartate 167, glycine 180, and asparagine 273; that span reads VVSGG. Residue aspartate 301 participates in Fe cation binding.

The protein belongs to the KAE1 / TsaD family. Requires Fe(2+) as cofactor.

It is found in the cytoplasm. It catalyses the reaction L-threonylcarbamoyladenylate + adenosine(37) in tRNA = N(6)-L-threonylcarbamoyladenosine(37) in tRNA + AMP + H(+). Functionally, required for the formation of a threonylcarbamoyl group on adenosine at position 37 (t(6)A37) in tRNAs that read codons beginning with adenine. Is involved in the transfer of the threonylcarbamoyl moiety of threonylcarbamoyl-AMP (TC-AMP) to the N6 group of A37, together with TsaE and TsaB. TsaD likely plays a direct catalytic role in this reaction. This is tRNA N6-adenosine threonylcarbamoyltransferase from Shouchella clausii (strain KSM-K16) (Alkalihalobacillus clausii).